A 263-amino-acid polypeptide reads, in one-letter code: L-histidine 2-aminobutanoyltransferase (263 aa).

It belongs to the methyltransferase superfamily. CntL family. As to quaternary structure, interacts with CntM.

The enzyme catalyses L-histidine + S-adenosyl-L-methionine = (2S)-2-amino-4-{[(1S)-1-carboxy-2-(1H-imidazol-4-yl)ethyl]amino}butanoate + S-methyl-5'-thioadenosine + H(+). In terms of biological role, catalyzes the nucleophilic attack of one alpha-aminobutanoate moiety from SAM onto L-histidine to produce the intermediate (2S)-2-amino-4-{[(1S)-1-carboxy-2-(1H-imidazol-4-yl)ethyl]amino}butanoate. Functions in the biosynthesis of the metallophore pseudopaline, which is involved in the acquisition of nickel and zinc, and thus enables bacterial growth inside the host, where metal access is limited. Therefore, this enzyme probably contributes to Pseudomonas virulence. Cannot use D-histidine in place of L-histidine as substrate. This Pseudomonas aeruginosa (strain UCBPP-PA14) protein is L-histidine 2-aminobutanoyltransferase.